Reading from the N-terminus, the 369-residue chain is Molybdenum import ATP-binding protein ModC (369 aa).

Residues 7–243 form the ABC transporter domain; it reads PGQAGIHARF…LDLPMAMTDD (237 aa). 41–48 contacts ATP; sequence GQSGSGKT. A Mop domain is found at 304 to 369; it reads EGSILNVLAV…AQIKAVSLLA (66 aa).

It belongs to the ABC transporter superfamily. Molybdate importer (TC 3.A.1.8) family. In terms of assembly, the complex is composed of two ATP-binding proteins (ModC), two transmembrane proteins (ModB) and a solute-binding protein (ModA).

Its subcellular location is the cell inner membrane. The catalysed reaction is molybdate(out) + ATP + H2O = molybdate(in) + ADP + phosphate + H(+). Functionally, part of the ABC transporter complex ModABC involved in molybdenum import. Responsible for energy coupling to the transport system. The protein is Molybdenum import ATP-binding protein ModC of Bordetella bronchiseptica (strain ATCC BAA-588 / NCTC 13252 / RB50) (Alcaligenes bronchisepticus).